Here is a 209-residue protein sequence, read N- to C-terminus: Uracil phosphoribosyltransferase (209 aa).

Residues Arg-79, Arg-104, and 131 to 139 each bind 5-phospho-alpha-D-ribose 1-diphosphate; that span reads DPMLATGNS. Residues Ile-194 and 199–201 each bind uracil; that span reads GDA. Residue Asp-200 participates in 5-phospho-alpha-D-ribose 1-diphosphate binding.

Belongs to the UPRTase family. Requires Mg(2+) as cofactor.

The catalysed reaction is UMP + diphosphate = 5-phospho-alpha-D-ribose 1-diphosphate + uracil. Its pathway is pyrimidine metabolism; UMP biosynthesis via salvage pathway; UMP from uracil: step 1/1. Allosterically activated by GTP. Its function is as follows. Catalyzes the conversion of uracil and 5-phospho-alpha-D-ribose 1-diphosphate (PRPP) to UMP and diphosphate. The polypeptide is Uracil phosphoribosyltransferase (Rhizobium meliloti (strain 1021) (Ensifer meliloti)).